Here is a 764-residue protein sequence, read N- to C-terminus: Metabotropic glutamate receptor-like protein H (764 aa).

The N-terminal stretch at 1–20 is a signal peptide; the sequence is MKNILKILILILICINKINC. Residues 21–393 lie on the Extracellular side of the membrane; the sequence is LDGDGKQFRM…EVEFSQSIQN (373 aa). Residues asparagine 72, asparagine 260, asparagine 278, asparagine 344, and asparagine 379 are each glycosylated (N-linked (GlcNAc...) asparagine). Residues 394–414 traverse the membrane as a helical segment; that stretch reads GFSITTGILIGITILMMIGII. Residues 415-427 lie on the Cytoplasmic side of the membrane; that stretch reads KYSKTPSMRSASP. The chain crosses the membrane as a helical span at residues 428–448; sequence IFLNFILAGGIIVYIGIIVWV. Residues 449-464 are Extracellular-facing; the sequence is GPMSTHSCNARLWLVT. The helical transmembrane segment at 465 to 485 threads the bilayer; sequence LGFSTLIGSLVVKNFRIWLIF. Residues 486 to 500 are Cytoplasmic-facing; the sequence is DNPELKSIKITNYQL. A helical membrane pass occupies residues 501–521; the sequence is FPWVGACLVINIILMAILTSV. The Extracellular segment spans residues 522 to 552; sequence GDLKQIDAMNIDSLGKYEYMKVCKMNSSGAS. The N-linked (GlcNAc...) asparagine glycan is linked to asparagine 547. Residues 553–573 form a helical membrane-spanning segment; the sequence is TLYTILAYFAALLLVGVFVSW. Over 574 to 587 the chain is Cytoplasmic; sequence KIRIVDILEFNESG. The chain crosses the membrane as a helical span at residues 588–608; the sequence is AIANTLYAISFCLFVIVPLMI. Over 609-617 the chain is Extracellular; that stretch reads SPQDMQSET. Residues 618–638 form a helical membrane-spanning segment; sequence IILCTTGLFITTAALLIIFIP. At 639–764 the chain is on the cytoplasmic side; that stretch reads KFWRVFRKGA…IIVNDSENNN (126 aa). The disordered stretch occupies residues 664–764; the sequence is ATARAESGSK…IIVNDSENNN (101 aa). Low complexity predominate over residues 671-690; the sequence is GSKGSNGNASSGNRTNRRGN. Positions 707–719 are enriched in basic and acidic residues; sequence ENQKEKEKIKDDV. The span at 731-748 shows a compositional bias: acidic residues; sequence FTDEASDTDNNEFNDIEL.

The protein in the N-terminal section; belongs to the BMP lipoprotein family. It in the C-terminal section; belongs to the G-protein coupled receptor 3 family. GABA-B receptor subfamily.

Its subcellular location is the membrane. This chain is Metabotropic glutamate receptor-like protein H (grlH), found in Dictyostelium discoideum (Social amoeba).